Reading from the N-terminus, the 555-residue chain is Ribonuclease J2 (555 aa).

The Zn(2+) site is built by histidine 74, histidine 76, histidine 142, and aspartate 164. 364 to 368 (HVSGH) serves as a coordination point for substrate.

It belongs to the metallo-beta-lactamase superfamily. RNA-metabolizing metallo-beta-lactamase-like family. Bacterial RNase J subfamily. As to quaternary structure, unclear whether it forms homodimers or belongs to a larger complex. According to probably does not form homodimers, while shows homodimer formation. Both reports show RNase J1 and J2 interaction, probably as a heterotetramer shows it is a component of a possible RNA degradosome complex composed of rny, rnjA, rnjB, pnp, pfkA and eno, while finds no evidence of an RNA degradosome complex. Zn(2+) is required as a cofactor.

The protein resides in the cytoplasm. Its function is as follows. Endonucleolytically cleaves the 5'-leader sequence of certain mRNAs. Endonuclease digestion by the RNase J1/J2 complex occurs at a different site and in some cases more efficiently than J1 or J2 alone. The exonuclease activity of the J1/J2 complex is highly processive on substrates longer than 5 nucleotides, on shorter substrates is distributive. Plays a role in mRNA maturation and stability. Appears to have a limited effect on 16S rRNA maturation, despite its similarity to RNase J1. This subunit alone has very poor 5'-3' exonuclease activity. The chain is Ribonuclease J2 from Bacillus subtilis (strain 168).